A 293-amino-acid polypeptide reads, in one-letter code: Mediator of RNA polymerase II transcription subunit 27 (293 aa).

The protein belongs to the Mediator complex subunit 27 family. As to quaternary structure, component of the Mediator complex, which includes at least CDK8, MED4, MED6, MED11, MED14, MED17, MED18, MED20, MED21, MED22, MED27, MED28, MED30 and MED31.

It is found in the nucleus. Its function is as follows. Component of the Mediator complex, a coactivator involved in the regulated transcription of nearly all RNA polymerase II-dependent genes. Mediator functions as a bridge to convey information from gene-specific regulatory proteins to the basal RNA polymerase II transcription machinery. Mediator is recruited to promoters by direct interactions with regulatory proteins and serves as a scaffold for the assembly of a functional preinitiation complex with RNA polymerase II and the general transcription factors. Required for activated transcription of the MtnA gene. The sequence is that of Mediator of RNA polymerase II transcription subunit 27 (MED27) from Drosophila melanogaster (Fruit fly).